A 313-amino-acid polypeptide reads, in one-letter code: Acetyl-coenzyme A carboxylase carboxyl transferase subunit alpha (313 aa).

Positions 34–288 (KLKDQRDIAL…KNVVLEAVNE (255 aa)) constitute a CoA carboxyltransferase C-terminal domain.

It belongs to the AccA family. Acetyl-CoA carboxylase is a heterohexamer composed of biotin carboxyl carrier protein (AccB), biotin carboxylase (AccC) and two subunits each of ACCase subunit alpha (AccA) and ACCase subunit beta (AccD).

It localises to the cytoplasm. It carries out the reaction N(6)-carboxybiotinyl-L-lysyl-[protein] + acetyl-CoA = N(6)-biotinyl-L-lysyl-[protein] + malonyl-CoA. Its pathway is lipid metabolism; malonyl-CoA biosynthesis; malonyl-CoA from acetyl-CoA: step 1/1. Functionally, component of the acetyl coenzyme A carboxylase (ACC) complex. First, biotin carboxylase catalyzes the carboxylation of biotin on its carrier protein (BCCP) and then the CO(2) group is transferred by the carboxyltransferase to acetyl-CoA to form malonyl-CoA. This chain is Acetyl-coenzyme A carboxylase carboxyl transferase subunit alpha, found in Fusobacterium nucleatum subsp. nucleatum (strain ATCC 25586 / DSM 15643 / BCRC 10681 / CIP 101130 / JCM 8532 / KCTC 2640 / LMG 13131 / VPI 4355).